Reading from the N-terminus, the 387-residue chain is Zinc finger protein neuro-d4 (387 aa).

Glycyl lysine isopeptide (Lys-Gly) (interchain with G-Cter in SUMO2) cross-links involve residues Lys106, Lys129, and Lys133. Residues 195 to 218 (YVCDICGKRYKNRPGLSYHYTHTH) form a C2H2-type zinc finger. 2 PHD-type zinc fingers span residues 271–328 (NGYC…CKSC) and 325–375 (CKSC…CLRH). Positions 274, 277, 293, 296, 301, 304, 322, 325, 328, 331, 343, 346, 351, 354, 369, and 372 each coordinate Zn(2+).

The protein belongs to the requiem/DPF family. Component of neuron-specific chromatin remodeling complex (nBAF complex) composed of at least, ARID1A/BAF250A or ARID1B/BAF250B, SMARCD1/BAF60A, SMARCD3/BAF60C, SMARCA2/BRM/BAF190B, SMARCA4/BRG1/BAF190A, SMARCB1/BAF47, SMARCC1/BAF155, SMARCE1/BAF57, SMARCC2/BAF170, DPF1/BAF45B, DPF3/BAF45C, ACTL6B/BAF53B and actin. In terms of tissue distribution, at embryonic stages, predominant expression in the nervous system. Expressed specifically in postmitotic neurons (at protein level).

Its subcellular location is the cytoplasm. The protein resides in the nucleus. Its function is as follows. May have an important role in developing neurons by participating in regulation of cell survival, possibly as a neurospecific transcription factor. Belongs to the neuron-specific chromatin remodeling complex (nBAF complex). During neural development a switch from a stem/progenitor to a postmitotic chromatin remodeling mechanism occurs as neurons exit the cell cycle and become committed to their adult state. The transition from proliferating neural stem/progenitor cells to postmitotic neurons requires a switch in subunit composition of the npBAF and nBAF complexes. As neural progenitors exit mitosis and differentiate into neurons, npBAF complexes which contain ACTL6A/BAF53A and PHF10/BAF45A, are exchanged for homologous alternative ACTL6B/BAF53B and DPF1/BAF45B or DPF3/BAF45C subunits in neuron-specific complexes (nBAF). The npBAF complex is essential for the self-renewal/proliferative capacity of the multipotent neural stem cells. The nBAF complex along with CREST plays a role regulating the activity of genes essential for dendrite growth. The polypeptide is Zinc finger protein neuro-d4 (Mus musculus (Mouse)).